The chain runs to 76 residues: UPF0729 protein C18orf32 (76 aa).

Residues 1 to 37 (MVCIPCIVIPVLLWIYKKFLEPYIYPLVSPFVSRIWP) form a necessary for its localzation to the endoplasmic reticulum and lipid droplets region. The disordered stretch occupies residues 46–76 (DTNKGKVNFKGADMNGLPTKGPTEICDKKKD).

Belongs to the UPF0729 family. As to quaternary structure, interacts with DERL1 and AMFR. Undergoes ER-associated degradation (ERAD).

The protein resides in the endoplasmic reticulum. The protein localises to the lipid droplet. In terms of biological role, may activate the NF-kappa-B signaling pathway. The chain is UPF0729 protein C18orf32 (C18orf32) from Homo sapiens (Human).